A 293-amino-acid chain; its full sequence is Protease HtpX homolog (293 aa).

The next 2 membrane-spanning stretches (helical) occupy residues 4 to 24 and 40 to 60; these read VILFLITNLAVMLVLSATLRI and ALLMFSLVVGFTGSFISLLIS. His-146 contributes to the Zn(2+) binding site. The active site involves Glu-147. His-150 provides a ligand contact to Zn(2+). Helical transmembrane passes span 161-181 and 198-218; these read LIQGVVNTFVVFLARVVGYFV and VTVIVCEIVFGVLASIIVAWF. Zn(2+) is bound at residue Glu-223.

It belongs to the peptidase M48B family. It depends on Zn(2+) as a cofactor.

It localises to the cell inner membrane. The chain is Protease HtpX homolog from Bordetella avium (strain 197N).